We begin with the raw amino-acid sequence, 376 residues long: Chaperone protein DnaJ (376 aa).

The 66-residue stretch at 5 to 70 (DYYEILGVSK…QKRAAYDQYG (66 aa)) folds into the J domain. The segment at 131-209 (GVTKEIRIPT…CHGHGRVERS (79 aa)) adopts a CR-type zinc-finger fold. The Zn(2+) site is built by C144, C147, C161, C164, C183, C186, C197, and C200. CXXCXGXG motif repeat units follow at residues 144-151 (CDVCHGSG), 161-168 (CPTCHGSG), 183-190 (CPHCQGRG), and 197-204 (CNKCHGHG).

This sequence belongs to the DnaJ family. Homodimer. It depends on Zn(2+) as a cofactor.

It localises to the cytoplasm. In terms of biological role, participates actively in the response to hyperosmotic and heat shock by preventing the aggregation of stress-denatured proteins and by disaggregating proteins, also in an autonomous, DnaK-independent fashion. Unfolded proteins bind initially to DnaJ; upon interaction with the DnaJ-bound protein, DnaK hydrolyzes its bound ATP, resulting in the formation of a stable complex. GrpE releases ADP from DnaK; ATP binding to DnaK triggers the release of the substrate protein, thus completing the reaction cycle. Several rounds of ATP-dependent interactions between DnaJ, DnaK and GrpE are required for fully efficient folding. Also involved, together with DnaK and GrpE, in the DNA replication of plasmids through activation of initiation proteins. This Shigella flexneri protein is Chaperone protein DnaJ.